Consider the following 236-residue polypeptide: Large ribosomal subunit protein uL3 (236 aa).

Belongs to the universal ribosomal protein uL3 family. Part of the 50S ribosomal subunit. Forms a cluster with proteins L14 and L19.

In terms of biological role, one of the primary rRNA binding proteins, it binds directly near the 3'-end of the 23S rRNA, where it nucleates assembly of the 50S subunit. This chain is Large ribosomal subunit protein uL3, found in Mycoplasmoides gallisepticum (strain R(low / passage 15 / clone 2)) (Mycoplasma gallisepticum).